Consider the following 68-residue polypeptide: Large ribosomal subunit protein bL35 (68 aa).

This sequence belongs to the bacterial ribosomal protein bL35 family.

The chain is Large ribosomal subunit protein bL35 from Rickettsia typhi (strain ATCC VR-144 / Wilmington).